The sequence spans 900 residues: Alanine--tRNA ligase (900 aa).

Residues H604, H608, C708, and H712 each coordinate Zn(2+).

Belongs to the class-II aminoacyl-tRNA synthetase family. Zn(2+) serves as cofactor.

The protein localises to the cytoplasm. The enzyme catalyses tRNA(Ala) + L-alanine + ATP = L-alanyl-tRNA(Ala) + AMP + diphosphate. Functionally, catalyzes the attachment of alanine to tRNA(Ala) in a two-step reaction: alanine is first activated by ATP to form Ala-AMP and then transferred to the acceptor end of tRNA(Ala). Also edits incorrectly charged Ser-tRNA(Ala) and Gly-tRNA(Ala) via its editing domain. This Saccharolobus islandicus (strain M.16.27) (Sulfolobus islandicus) protein is Alanine--tRNA ligase.